The chain runs to 105 residues: DNA-directed RNA polymerases I and III subunit RPAC2 (105 aa).

Belongs to the archaeal Rpo11/eukaryotic RPB11/RPC19 RNA polymerase subunit family. Component of the RNA polymerase I (Pol I) and RNA polymerase III (Pol III) complexes consisting of at least 13 and 17 subunits, respectively.

The protein resides in the nucleus. Its function is as follows. DNA-dependent RNA polymerase catalyzes the transcription of DNA into RNA using the four ribonucleoside triphosphates as substrates. Common core component of RNA polymerases I and III which synthesize ribosomal RNA precursors and small RNAs, such as 5S rRNA and tRNAs, respectively. This Drosophila melanogaster (Fruit fly) protein is DNA-directed RNA polymerases I and III subunit RPAC2.